We begin with the raw amino-acid sequence, 157 residues long: Small ribosomal subunit protein uS7 (157 aa).

It belongs to the universal ribosomal protein uS7 family. As to quaternary structure, part of the 30S ribosomal subunit. Contacts proteins S9 and S11.

Its function is as follows. One of the primary rRNA binding proteins, it binds directly to 16S rRNA where it nucleates assembly of the head domain of the 30S subunit. Is located at the subunit interface close to the decoding center, probably blocks exit of the E-site tRNA. This is Small ribosomal subunit protein uS7 from Borreliella afzelii (strain PKo) (Borrelia afzelii).